Here is a 662-residue protein sequence, read N- to C-terminus: DNA helicase/primase complex-associated protein (662 aa).

This sequence belongs to the herpesviridae HEPA family. In terms of assembly, associates with the primase and the helicase to form the helicase-primase complex. Interacts with the origin-binding protein. Interacts with the polymerase catalytic subunit.

The protein localises to the host nucleus. Functionally, component of the helicase/primase complex. Unwinds the DNA at the replication forks and generates single-stranded DNA for both leading and lagging strand synthesis. The primase synthesizes short RNA primers on the lagging strand that the polymerase presumably elongates using dNTPs. The primase-associated factor has no known catalytic activity in the complex and may serve to facilitate the formation of the replisome by directly interacting with the origin-binding protein and the polymerase. This chain is DNA helicase/primase complex-associated protein (U74), found in Human herpesvirus 6B (strain Z29) (HHV-6 variant B).